Reading from the N-terminus, the 823-residue chain is Bifunctional enzyme flvA (823 aa).

The tract at residues 56-535 (TAKFEMALMP…QRLYDAKFYI (480 aa)) is pyridoxal 5'-phosphate-dependent lyase. Lysine 331 carries the N6-(pyridoxal phosphate)lysine modification. An alpha-ketoglutarate-dependent oxygenase region spans residues 573-823 (DFDALQQVSH…TLPMNVPLWL (251 aa)). Residues histidine 703 and aspartate 705 each contribute to the Fe cation site.

This sequence in the N-terminal section; belongs to the trans-sulfuration enzymes family. It in the C-terminal section; belongs to the iron/ascorbate-dependent oxidoreductase family. Pyridoxal 5'-phosphate serves as cofactor. It depends on Fe(2+) as a cofactor.

It catalyses the reaction O-acetyl-L-homoserine + 3-methyl-2-oxobutanoate = (6S)-6-amino-3,3-dimethyl-2-oxoheptanedioate + acetate + H(+). The enzyme catalyses (6S)-3,3-dimethylpiperidine-2,6-dicarboxylate + 2-oxoglutarate + AH2 + O2 + H(+) = (2S)-5,5-dimethylpiperidine-2-carboxylate + succinate + A + 2 CO2 + H2O. Its pathway is secondary metabolite biosynthesis; terpenoid biosynthesis. Its function is as follows. Bifunctional enzyme; part of the gene cluster that mediates the biosynthesis of flavunoidine, an alkaloidal terpenoid with a tetracyclic cage-like core connected to dimethylcadaverine via a C-N bond and acylated with 5,5-dimethyl-L-pipecolate. The tetracyclic core is synthesized by the terpene cyclase flvE and the cytochrome P450 monooxygenase flvD. The terpene cyclase flvE catalyzes the cyclization of farnesyl pyrophosphate (FPP) to form (1R,4R,5S)-(+)-acoradiene and the cytochrome P450 monooxygenase flvD is then responsible for oxidative conversion of (1R,4R,5S)-(+)-acoradiene into the tetracyclic cage present in the final product flavunoidine. In parallel, the N-methyltransferase flvH dimethylates L-lysine to give N,N-dimethyl-L-Lysin which is decarboxylated by flvG to afford dimethylcadaverine. The terpene cyclase-like protein flvF is the enzyme that attaches the dimethylcadaverine precusor at the C-7 of the tetracyclic cage to yield pre-flavunoidine. The cytochrome monooxygenase flvC hydroxylates the C-10 position of pre-flavunoidine whereas the NRPS flvI acylates the terpenoid core at the hydroxylated C-10 with dimethylpipecolate to yield final flavunoidine. The bifunctional enzyme flvA and the dehydrogenase flvB are responsible for the synthesis of the dimethylpipecolate precursor. The PLP-dependent lyase domain of flvA might use L-O-acetyl-homoserine and alpha-keto-isovalerate to form an intermediary ketone that can cyclize intramolecularly to yield an imine. The imine can be reduced by flvB to yield the 6-carboxylated pipecolate. The C-terminal alpha-KG-dependent oxygenase domain of flvA is then proposed to catalyze the decarboxylation to yield dimethylpipecolate. This is Bifunctional enzyme flvA from Aspergillus flavus (strain ATCC 200026 / FGSC A1120 / IAM 13836 / NRRL 3357 / JCM 12722 / SRRC 167).